Consider the following 137-residue polypeptide: Large ribosomal subunit protein uL24 (137 aa).

Belongs to the universal ribosomal protein uL24 family. In terms of assembly, part of the 50S ribosomal subunit.

Functionally, one of two assembly initiator proteins, it binds directly to the 5'-end of the 23S rRNA, where it nucleates assembly of the 50S subunit. In terms of biological role, located at the polypeptide exit tunnel on the outside of the subunit. This is Large ribosomal subunit protein uL24 from Sulfurisphaera tokodaii (strain DSM 16993 / JCM 10545 / NBRC 100140 / 7) (Sulfolobus tokodaii).